Reading from the N-terminus, the 274-residue chain is Bis(5'-nucleosyl)-tetraphosphatase, symmetrical (274 aa).

It belongs to the Ap4A hydrolase family.

The catalysed reaction is P(1),P(4)-bis(5'-adenosyl) tetraphosphate + H2O = 2 ADP + 2 H(+). Its function is as follows. Hydrolyzes diadenosine 5',5'''-P1,P4-tetraphosphate to yield ADP. The sequence is that of Bis(5'-nucleosyl)-tetraphosphatase, symmetrical from Shewanella oneidensis (strain ATCC 700550 / JCM 31522 / CIP 106686 / LMG 19005 / NCIMB 14063 / MR-1).